The primary structure comprises 116 residues: MRVKRGFKARRRRKKVLKLAKGFRGGHSKLYRTAADTVDRALMYAYRDRRQKKRDFRALWIARINAGARMNGLSYSKFIYGLKQADVALDRKVLAELAISDPACFAEITSLAAKQA.

Belongs to the bacterial ribosomal protein bL20 family.

Binds directly to 23S ribosomal RNA and is necessary for the in vitro assembly process of the 50S ribosomal subunit. It is not involved in the protein synthesizing functions of that subunit. In Desulfatibacillum aliphaticivorans, this protein is Large ribosomal subunit protein bL20.